The sequence spans 370 residues: Sphingolipid delta(4)-desaturase (370 aa).

The next 3 helical transmembrane spans lie at 68–88 (VMGV…TPVF), 92–112 (FLTL…LAIH), and 128–148 (LFAV…FQPY). A Histidine box-1 motif is present at residues 112–116 (HELSH). The Histidine box-2 signature appears at 149-153 (HQLHH). 3 helical membrane passes run 173-193 (FLSS…FYAL), 197-217 (FITQ…QLIF), and 220-240 (VMVT…TFLA). Positions 299–303 (HNEHH) match the Histidine box-3 motif.

It belongs to the fatty acid desaturase type 1 family. DEGS subfamily.

The protein localises to the membrane. The enzyme catalyses an N-acylsphinganine + 2 Fe(II)-[cytochrome b5] + O2 + 2 H(+) = an N-acylsphing-4-enine + 2 Fe(III)-[cytochrome b5] + 2 H2O. Its pathway is lipid metabolism; sphingolipid metabolism. In terms of biological role, delta(4)-fatty-acid desaturase which introduces a double bond at the 4-position in the long-chain base (LCB) of ceramides. Required for the formation of the monounsaturated sphingoid base (E)-sphing-4-enine during glucosylceramide (GluCer) biosynthesis. This Candida albicans (strain SC5314 / ATCC MYA-2876) (Yeast) protein is Sphingolipid delta(4)-desaturase.